We begin with the raw amino-acid sequence, 217 residues long: Uracil-DNA glycosylase (217 aa).

Asp-62 acts as the Proton acceptor in catalysis.

Belongs to the uracil-DNA glycosylase (UDG) superfamily. UNG family.

The protein resides in the cytoplasm. It carries out the reaction Hydrolyzes single-stranded DNA or mismatched double-stranded DNA and polynucleotides, releasing free uracil.. In terms of biological role, excises uracil residues from the DNA which can arise as a result of misincorporation of dUMP residues by DNA polymerase or due to deamination of cytosine. The polypeptide is Uracil-DNA glycosylase (Streptococcus thermophilus (strain ATCC BAA-491 / LMD-9)).